We begin with the raw amino-acid sequence, 472 residues long: Threonine synthase-like 2 (472 aa).

Lysine 113 carries the post-translational modification N6-(pyridoxal phosphate)lysine.

This sequence belongs to the threonine synthase family. Pyridoxal 5'-phosphate serves as cofactor.

Its function is as follows. Acts as a catabolic phospho-lyase on both gamma- and beta-phosphorylated substrates. Degrades O-phospho-threonine (PThr) to alpha-ketobutyrate, ammonia and phosphate. The polypeptide is Threonine synthase-like 2 (thnsl2) (Xenopus laevis (African clawed frog)).